A 192-amino-acid polypeptide reads, in one-letter code: uncharacterized protein (192 aa).

A Nudix hydrolase domain is found at 29-160 (HRQAAVLIPI…PLDIYRRGDS (132 aa)). A Nudix box motif is present at residues 67–89 (GAVDDTDASVIAAALREAEEEVA). Mg(2+) is bound by residues Glu-83 and Glu-87.

Belongs to the Nudix hydrolase family. PCD1 subfamily. It depends on Mn(2+) as a cofactor. Requires Mg(2+) as cofactor.

Its function is as follows. Probably mediates the hydrolysis of some nucleoside diphosphate derivatives. This is an uncharacterized protein from Escherichia coli O139:H28 (strain E24377A / ETEC).